The primary structure comprises 160 residues: Anaerobic nitrite reductase MHB1 (160 aa).

Positions 8–157 constitute a Globin domain; it reads GFTEEQEALV…LVNAIKSEMK (150 aa). The short motif at 41–45 is the Homodimerization element; the sequence is EIAPS. Residues serine 51, lysine 65, histidine 69, lysine 99, and histidine 104 each coordinate heme b. The Homodimerization signature appears at 111–123; sequence DEHFEVTKFALLE.

Belongs to the plant globin family. Homodimer. Heme b serves as cofactor. In terms of tissue distribution, root specific.

It is found in the nucleus matrix. The protein localises to the cytoplasm. It catalyses the reaction Fe(III)-heme b-[protein] + nitric oxide + H2O = Fe(II)-heme b-[protein] + nitrite + 2 H(+). Phytoglobin that reduces nitrite to nitric oxide (NO) under anoxic conditions (e.g. during flooding or in waterlogged soil) and upon root nodulation. Required for general plant development and during nodulation, especially for the onset of symbiosis. Monitors nitric oxide (NO) levels during early phase of the nitrogen-fixing symbiosis and buffers oxygen in functioning nodules. May not function as an oxygen storage or transport protein. Has an unusually high affinity for O(2) through a hexacoordinate heme iron because of a very low dissociation constant. The chain is Anaerobic nitrite reductase MHB1 from Medicago sativa (Alfalfa).